An 811-amino-acid polypeptide reads, in one-letter code: Glycerol-3-phosphate acyltransferase (811 aa).

An HXXXXD motif motif is present at residues 305–310 (CHRSHI).

It belongs to the GPAT/DAPAT family.

It is found in the cell inner membrane. It carries out the reaction sn-glycerol 3-phosphate + an acyl-CoA = a 1-acyl-sn-glycero-3-phosphate + CoA. It functions in the pathway phospholipid metabolism; CDP-diacylglycerol biosynthesis; CDP-diacylglycerol from sn-glycerol 3-phosphate: step 1/3. The protein is Glycerol-3-phosphate acyltransferase of Histophilus somni (strain 129Pt) (Haemophilus somnus).